The sequence spans 879 residues: Nuclear autoantigen Sp-100 (879 aa).

Ala-2 bears the N-acetylalanine mark. Ser-18 is modified (phosphoserine). The HSR domain maps to 33–149 (DLQRMFTEDQ…IYKGFENVIH (117 aa)). Positions 154–245 (LQESEEEERE…EQCAQKAEPT (92 aa)) are disordered. At Ser-157 the chain carries Phosphoserine. The short motif at 165–168 (RSGL) is the D-box; recognition signal for CDC20-mediated degradation element. Phosphoserine is present on residues Ser-171, Ser-180, and Ser-228. The segment covering 176-200 (TGENSFRSLTWPPSGSPSHAGTTPP) has biased composition (polar residues). A compositionally biased stretch (basic and acidic residues) spans 207-228 (HPCETEQINAKRKDTTSDKDDS). Residues 229-238 (LGSQQTNEQC) are compositionally biased toward polar residues. Lys-241 is covalently cross-linked (Glycyl lysine isopeptide (Lys-Gly) (interchain with G-Cter in SUMO2)). Residues 284-297 (IQINSCSVRLVDIK) carry the PxVxL motif motif. Lys-297 participates in a covalent cross-link: Glycyl lysine isopeptide (Lys-Gly) (interchain with G-Cter in SUMO). Glycyl lysine isopeptide (Lys-Gly) (interchain with G-Cter in SUMO2) cross-links involve residues Lys-300 and Lys-306. A phosphoserine mark is found at Ser-331 and Ser-362. Residues 333 to 478 (GSTDVDEPLE…SSSLRRGSGS (146 aa)) are sufficient to mediate interaction with ETS1. Positions 345–386 (ISAPRSEPVINNDNPLESNDEKEGQEATCSRPQIVPEPMDFR) are disordered. Residues Lys-366 and Lys-387 each participate in a glycyl lysine isopeptide (Lys-Gly) (interchain with G-Cter in SUMO2) cross-link. A phosphoserine mark is found at Ser-394, Ser-407, Ser-409, Ser-410, and Ser-451. The disordered stretch occupies residues 401–596 (GQDHDFSESS…KRGPRIPKDE (196 aa)). Residues 466–482 (ETCSSSLRRGSGSQPQE) are compositionally biased toward polar residues. Residues 530 to 591 (SGKRRKKRRH…LKRRRKRGPR (62 aa)) show a composition bias toward basic residues. Short sequence motifs (nuclear localization signal) lie at residues 536–553 (KRRH…RKKD) and 568–592 (KRWQ…GPRI). A Glycyl lysine isopeptide (Lys-Gly) (interchain with G-Cter in SUMO2) cross-link involves residue Lys-594. Residues 595–676 (DENINFKQSE…KVLMENKFLP (82 aa)) enclose the SAND domain. DNA-binding regions (HMG box) lie at residues 677 to 753 (EPPS…KTYI) and 769 to 837 (PKRP…AAYR). The Nuclear localization signal signature appears at 717 to 734 (KKCSETWKTIFAKEKGKF). The disordered stretch occupies residues 835 to 879 (AYRAKGKPNSAKKRVVKAEKSKKKKEEEEDEEDEQEEENEEDDDK). Over residues 838–857 (AKGKPNSAKKRVVKAEKSKK) the composition is skewed to basic residues. A compositionally biased stretch (acidic residues) spans 861-879 (EEEDEEDEQEEENEEDDDK).

As to quaternary structure, homodimer; isoforms are able to heterodimerize. Interacts with members of the HP1 family of nonhistone chromosomal protein, such as CBX5 and CBX3 via the PxVxL motif. Interacts with ETS1; the interaction is direct and modulates ETS1 transcriptional activity. Interacts with the MRN complex which is composed of two heterodimers RAD50/MRE11 associated with a single NBN; recruits the complex to PML-related bodies. Interacts with HIPK2; positively regulates TP53-dependent transcription. Interacts with CASP8AP2; may negatively regulate CASP8AP2 export from the nucleus to the cytoplasm. Interacts with SUMO1P1/SUMO5. In terms of assembly, (Microbial infection) Interacts with Epstein-Barr virus EBNA-LP; this interaction is important for EBNA-LP coactivator activity. (Microbial infection) Interacts with human cytomegalovirus/HHV-5 protein UL123; may play a role in infection by the virus. In terms of processing, sumoylated. Sumoylation depends on a functional nuclear localization signal but is not necessary for nuclear import or nuclear body targeting. Post-translationally, sumoylated. Sumoylated with SUMO1. Sumoylation depends on a functional nuclear localization signal but is not necessary for nuclear import or nuclear body targeting. Sumoylation may stabilize the interaction with CBX5. (Microbial infection) Immediate early protein IE1 of human cytomegalovirus (HHV-5) interferes with the sumoylation of SP100. In terms of tissue distribution, widely expressed. Sp100-B is expressed only in spleen, tonsil, thymus, mature B-cell line and some T-cell line, but not in brain, liver, muscle or non-lymphoid cell lines.

It localises to the nucleus. The protein localises to the PML body. Its subcellular location is the nuclear body. It is found in the cytoplasm. Its function is as follows. Together with PML, this tumor suppressor is a major constituent of the PML bodies, a subnuclear organelle involved in a large number of physiological processes including cell growth, differentiation and apoptosis. Functions as a transcriptional coactivator of ETS1 and ETS2 according to PubMed:11909962. Under certain conditions, it may also act as a corepressor of ETS1 preventing its binding to DNA according to PubMed:15247905. Through the regulation of ETS1 it may play a role in angiogenesis, controlling endothelial cell motility and invasion. Through interaction with the MRN complex it may be involved in the regulation of telomeres lengthening. May also regulate TP53-mediated transcription and through CASP8AP2, regulate FAS-mediated apoptosis. Also plays a role in infection by viruses, including human cytomegalovirus and Epstein-Barr virus, through mechanisms that may involve chromatin and/or transcriptional regulation. The polypeptide is Nuclear autoantigen Sp-100 (SP100) (Homo sapiens (Human)).